Consider the following 164-residue polypeptide: General odorant-binding protein 1 (164 aa).

The signal sequence occupies residues 1–19 (MPGVLRALLLLAAAAPLLA). Cystine bridges form between cysteine 38/cysteine 73, cysteine 69/cysteine 127, and cysteine 116/cysteine 136.

It belongs to the PBP/GOBP family. Antenna.

Its function is as follows. Present in the aqueous fluid surrounding olfactory sensory dendrites and are thought to aid in the capture and transport of hydrophobic odorants into and through this fluid. The polypeptide is General odorant-binding protein 1 (Heliothis virescens (Tobacco budworm moth)).